Consider the following 540-residue polypeptide: 2-isopropylmalate synthase (540 aa).

A Pyruvate carboxyltransferase domain is found at 8–273 (VLIFDTTLRD…FFGRDEDSPT (266 aa)). Positions 17, 208, 210, and 244 each coordinate Mn(2+). Positions 408 to 540 (QLKLVQVSCG…MAQLDSSPVH (133 aa)) are regulatory domain.

This sequence belongs to the alpha-IPM synthase/homocitrate synthase family. LeuA type 1 subfamily. In terms of assembly, homodimer. Requires Mn(2+) as cofactor.

It localises to the cytoplasm. It catalyses the reaction 3-methyl-2-oxobutanoate + acetyl-CoA + H2O = (2S)-2-isopropylmalate + CoA + H(+). It functions in the pathway amino-acid biosynthesis; L-leucine biosynthesis; L-leucine from 3-methyl-2-oxobutanoate: step 1/4. Catalyzes the condensation of the acetyl group of acetyl-CoA with 3-methyl-2-oxobutanoate (2-ketoisovalerate) to form 3-carboxy-3-hydroxy-4-methylpentanoate (2-isopropylmalate). The protein is 2-isopropylmalate synthase of Synechococcus sp. (strain CC9311).